An 898-amino-acid chain; its full sequence is Phosphoenolpyruvate carboxylase (898 aa).

Active-site residues include histidine 134 and lysine 564.

This sequence belongs to the PEPCase type 1 family. Mg(2+) is required as a cofactor.

It carries out the reaction oxaloacetate + phosphate = phosphoenolpyruvate + hydrogencarbonate. Its function is as follows. Forms oxaloacetate, a four-carbon dicarboxylic acid source for the tricarboxylic acid cycle. This is Phosphoenolpyruvate carboxylase from Chromobacterium violaceum (strain ATCC 12472 / DSM 30191 / JCM 1249 / CCUG 213 / NBRC 12614 / NCIMB 9131 / NCTC 9757 / MK).